The following is a 399-amino-acid chain: Calsequestrin-2 (399 aa).

The first 19 residues, 1–19 (MKRTHLFIVGIYFLSSCRA), serve as a signal peptide directing secretion. At Tyr282 the chain carries Phosphotyrosine. N-linked (GlcNAc...) asparagine glycosylation is present at Asn335. A disordered region spans residues 365–399 (VLSGKINTEDDDEDDDDDDNSDEEDNDDSDDDDDE). The span at 373-399 (EDDDEDDDDDDNSDEEDNDDSDDDDDE) shows a compositional bias: acidic residues. Ser385 and Ser393 each carry phosphoserine.

The protein belongs to the calsequestrin family. In terms of assembly, monomer, homodimer and homooligomer. Mostly monomeric in the absence of calcium. Forms higher oligomers in a calcium-dependent manner. Dimers associate to form tetramers, that then form linear homomer chains. Interacts with ASPH and TRDN. Post-translationally, phosphorylation in the C-terminus, probably by CK2, moderately increases calcium buffering capacity. In terms of processing, N-glycosylated.

The protein resides in the sarcoplasmic reticulum lumen. Functionally, calsequestrin is a high-capacity, moderate affinity, calcium-binding protein and thus acts as an internal calcium store in muscle. Calcium ions are bound by clusters of acidic residues at the protein surface, especially at the interface between subunits. Can bind around 60 Ca(2+) ions. Regulates the release of lumenal Ca(2+) via the calcium release channel RYR2; this plays an important role in triggering muscle contraction. Plays a role in excitation-contraction coupling in the heart and in regulating the rate of heart beats. The polypeptide is Calsequestrin-2 (CASQ2) (Homo sapiens (Human)).